The sequence spans 304 residues: Dermonecrotic toxin LiSicTox-betaIA1ii (304 aa).

An N-terminal signal peptide occupies residues 1–21 (MLLCAVISFIVYAVFLQEANG). The propeptide occupies 22–26 (HAAER). Residue histidine 38 is part of the active site. Mg(2+) contacts are provided by glutamate 58 and aspartate 60. Histidine 74 serves as the catalytic Nucleophile. Intrachain disulfides connect cysteine 78/cysteine 84 and cysteine 80/cysteine 223. Residue aspartate 118 participates in Mg(2+) binding.

It belongs to the arthropod phospholipase D family. Class II subfamily. Mg(2+) is required as a cofactor. Expressed by the venom gland.

The protein localises to the secreted. It catalyses the reaction an N-(acyl)-sphingosylphosphocholine = an N-(acyl)-sphingosyl-1,3-cyclic phosphate + choline. The catalysed reaction is an N-(acyl)-sphingosylphosphoethanolamine = an N-(acyl)-sphingosyl-1,3-cyclic phosphate + ethanolamine. The enzyme catalyses a 1-acyl-sn-glycero-3-phosphocholine = a 1-acyl-sn-glycero-2,3-cyclic phosphate + choline. It carries out the reaction a 1-acyl-sn-glycero-3-phosphoethanolamine = a 1-acyl-sn-glycero-2,3-cyclic phosphate + ethanolamine. Its function is as follows. Dermonecrotic toxins cleave the phosphodiester linkage between the phosphate and headgroup of certain phospholipids (sphingolipid and lysolipid substrates), forming an alcohol (often choline) and a cyclic phosphate. This toxin acts on sphingomyelin (SM) with low activity. It may also act on ceramide phosphoethanolamine (CPE), lysophosphatidylcholine (LPC) and lysophosphatidylethanolamine (LPE), but not on lysophosphatidylserine (LPS), and lysophosphatidylglycerol (LPG). It acts by transphosphatidylation, releasing exclusively cyclic phosphate products as second products. Induces dermonecrosis, hemolysis, increased vascular permeability, edema, inflammatory response, and platelet aggregation. The protein is Dermonecrotic toxin LiSicTox-betaIA1ii of Loxosceles intermedia (Brown spider).